Here is a 616-residue protein sequence, read N- to C-terminus: MPKYRSATTTHGRNMAGARALWRATGMTDNDFGKPIIAVVNSFTQFVPGHVHLRDLGKLVAEQIEASGGVAKEFNTIAVDDGIAMGHGGMLYSLPSRELIADSVEYMVNAHCADAMVCISNCDKITPGMLMASLRLNIPVIFVSGGPMEAGKTKLSDQIIKLDLVDAMIQGADPKVSDEQSEQVERSACPTCGSCSGMFTANSMNCLTEALGLSQPGNGSLLATHADRKQLFLNAGKRIVGLAKRYYEQDDESVLPRNIANKAAFENAMILDIAMGGSTNTVLHLLAAAQEGEVDFTMTDIDRLSRQVPHLCKVAPSTQKYHMEDVHRAGGVIGILGELDRAGLLNREVNNVLGKTLPETLEAYDVMLTQDDSVKSMYSAGPAGIRTTQAFSQDCRWDSLDTDRQEGCIRSREFAYSQDGGLAVLYGNLAENGCIVKTAGVDEGSLVFRGPAKVYESQDDAVDAILGGKVVAGDVVVIRYEGPKGGPGMQEMLYPTTYLKSMGLGKSCALITDGRFSGGTSGLSIGHASPEAASGGTIALVQDGDIIAIDIPNRSIALVLDDNALASRRAAEEARGDQAWTPHNRERQVSFALRAYASLATSADKGAVRDKSKLGG.

Asp-81 contacts Mg(2+). Cys-122 provides a ligand contact to [2Fe-2S] cluster. The Mg(2+) site is built by Asp-123 and Lys-124. N6-carboxylysine is present on Lys-124. Cys-195 serves as a coordination point for [2Fe-2S] cluster. Position 491 (Glu-491) interacts with Mg(2+). Ser-517 serves as the catalytic Proton acceptor.

This sequence belongs to the IlvD/Edd family. Homodimer. [2Fe-2S] cluster is required as a cofactor. It depends on Mg(2+) as a cofactor.

It carries out the reaction (2R)-2,3-dihydroxy-3-methylbutanoate = 3-methyl-2-oxobutanoate + H2O. The catalysed reaction is (2R,3R)-2,3-dihydroxy-3-methylpentanoate = (S)-3-methyl-2-oxopentanoate + H2O. It participates in amino-acid biosynthesis; L-isoleucine biosynthesis; L-isoleucine from 2-oxobutanoate: step 3/4. The protein operates within amino-acid biosynthesis; L-valine biosynthesis; L-valine from pyruvate: step 3/4. In terms of biological role, functions in the biosynthesis of branched-chain amino acids. Catalyzes the dehydration of (2R,3R)-2,3-dihydroxy-3-methylpentanoate (2,3-dihydroxy-3-methylvalerate) into 2-oxo-3-methylpentanoate (2-oxo-3-methylvalerate) and of (2R)-2,3-dihydroxy-3-methylbutanoate (2,3-dihydroxyisovalerate) into 2-oxo-3-methylbutanoate (2-oxoisovalerate), the penultimate precursor to L-isoleucine and L-valine, respectively. This is Dihydroxy-acid dehydratase from Pectobacterium carotovorum subsp. carotovorum (strain PC1).